A 346-amino-acid polypeptide reads, in one-letter code: Glycerol-1-phosphate dehydrogenase [NAD(P)+] (346 aa).

Residues 93–97 (GTIID) and 115–118 (TTAS) each bind NAD(+). D120 provides a ligand contact to substrate. S124 contacts NAD(+). D167 lines the substrate pocket. The Zn(2+) site is built by D167 and H247. H251 is a substrate binding site. Zn(2+) is bound at residue H263.

It belongs to the glycerol-1-phosphate dehydrogenase family. It depends on Zn(2+) as a cofactor.

The protein resides in the cytoplasm. The catalysed reaction is sn-glycerol 1-phosphate + NAD(+) = dihydroxyacetone phosphate + NADH + H(+). The enzyme catalyses sn-glycerol 1-phosphate + NADP(+) = dihydroxyacetone phosphate + NADPH + H(+). The protein operates within membrane lipid metabolism; glycerophospholipid metabolism. Functionally, catalyzes the NAD(P)H-dependent reduction of dihydroxyacetonephosphate (DHAP or glycerone phosphate) to glycerol 1-phosphate (G1P). The G1P thus generated is used as the glycerophosphate backbone of phospholipids in the cellular membranes of Archaea. The sequence is that of Glycerol-1-phosphate dehydrogenase [NAD(P)+] from Pyrococcus furiosus (strain ATCC 43587 / DSM 3638 / JCM 8422 / Vc1).